We begin with the raw amino-acid sequence, 313 residues long: Methionyl-tRNA formyltransferase (313 aa).

Residue 113–116 (SLLP) participates in (6S)-5,6,7,8-tetrahydrofolate binding.

The protein belongs to the Fmt family.

It carries out the reaction L-methionyl-tRNA(fMet) + (6R)-10-formyltetrahydrofolate = N-formyl-L-methionyl-tRNA(fMet) + (6S)-5,6,7,8-tetrahydrofolate + H(+). Attaches a formyl group to the free amino group of methionyl-tRNA(fMet). The formyl group appears to play a dual role in the initiator identity of N-formylmethionyl-tRNA by promoting its recognition by IF2 and preventing the misappropriation of this tRNA by the elongation apparatus. The polypeptide is Methionyl-tRNA formyltransferase (Francisella tularensis subsp. mediasiatica (strain FSC147)).